We begin with the raw amino-acid sequence, 378 residues long: Putative F-box protein At4g17565 (378 aa).

In terms of domain architecture, F-box spans 16 to 63; the sequence is PKWSELCPDLLRSIFEQLSFTNLNRAKLVCRSWNSASRGCVPKRNQIP.

The polypeptide is Putative F-box protein At4g17565 (Arabidopsis thaliana (Mouse-ear cress)).